The primary structure comprises 463 residues: Exodeoxyribonuclease 7 large subunit (463 aa).

This sequence belongs to the XseA family. In terms of assembly, heterooligomer composed of large and small subunits.

Its subcellular location is the cytoplasm. It catalyses the reaction Exonucleolytic cleavage in either 5'- to 3'- or 3'- to 5'-direction to yield nucleoside 5'-phosphates.. Bidirectionally degrades single-stranded DNA into large acid-insoluble oligonucleotides, which are then degraded further into small acid-soluble oligonucleotides. The sequence is that of Exodeoxyribonuclease 7 large subunit from Klebsiella pneumoniae subsp. pneumoniae (strain ATCC 700721 / MGH 78578).